Consider the following 341-residue polypeptide: Heme A synthase (341 aa).

A run of 5 helical transmembrane segments spans residues 11–31, 101–121, 127–147, 160–180, and 194–214; these read AVST…IIGG, LIGL…HLSA, LFGL…MVAS, LATH…FSLE, and AGVT…GAFV. Residue His259 participates in heme binding. 3 consecutive transmembrane segments (helical) span residues 261-278, 288-308, and 315-335; these read WTGY…WQVW, FMVI…AALL, and LSLA…AAAW. His319 serves as a coordination point for heme.

Belongs to the COX15/CtaA family. Type 2 subfamily. As to quaternary structure, interacts with CtaB. The cofactor is heme b.

It localises to the cell membrane. The catalysed reaction is Fe(II)-heme o + 2 A + H2O = Fe(II)-heme a + 2 AH2. It participates in porphyrin-containing compound metabolism; heme A biosynthesis; heme A from heme O: step 1/1. In terms of biological role, catalyzes the conversion of heme O to heme A by two successive hydroxylations of the methyl group at C8. The first hydroxylation forms heme I, the second hydroxylation results in an unstable dihydroxymethyl group, which spontaneously dehydrates, resulting in the formyl group of heme A. This Maricaulis maris (strain MCS10) (Caulobacter maris) protein is Heme A synthase.